The primary structure comprises 536 residues: uncharacterized protein (536 aa).

Over 1-8 (MVSIKRYE) the chain is Cytoplasmic. The chain crosses the membrane as a helical span at residues 9–29 (IISFVIAAFFFLSGLSMWIAF). The Extracellular segment spans residues 30–502 (WPIFNSELRS…VWLGVIIVPR (473 aa)). Asn-73, Asn-236, Asn-363, and Asn-376 each carry an N-linked (GlcNAc...) asparagine glycan. A helical membrane pass occupies residues 503 to 523 (IIEYLKFVLIFISICILTTLL). At 524–536 (VIRVRVKGTVSVV) the chain is on the cytoplasmic side.

Belongs to the CD36 family.

The protein resides in the membrane. This is an uncharacterized protein from Caenorhabditis elegans.